We begin with the raw amino-acid sequence, 381 residues long: Cytochrome b (381 aa).

4 helical membrane-spanning segments follow: residues 31–51, 75–97, 112–132, and 178–198; these read FGFL…FLAM, WLLR…IHIF, VWVI…IGYV, and FFSL…VHLA. H81 and H95 together coordinate heme b. Heme b-binding residues include H182 and H196. H201 serves as a coordination point for a ubiquinone. 4 helical membrane passes run 224 to 244, 288 to 308, 320 to 340, and 347 to 367; these read FIVK…IFVY, LGGV…PWIH, LYRL…WIGG, and YVII…ILLP.

This sequence belongs to the cytochrome b family. In terms of assembly, the main subunits of complex b-c1 are: cytochrome b, cytochrome c1 and the Rieske protein. Heme b is required as a cofactor.

It is found in the mitochondrion inner membrane. Its function is as follows. Component of the ubiquinol-cytochrome c reductase complex (complex III or cytochrome b-c1 complex) that is part of the mitochondrial respiratory chain. The b-c1 complex mediates electron transfer from ubiquinol to cytochrome c. Contributes to the generation of a proton gradient across the mitochondrial membrane that is then used for ATP synthesis. This Chondrus crispus (Carrageen Irish moss) protein is Cytochrome b (MT-CYB).